Consider the following 1707-residue polypeptide: Mediator of DNA damage checkpoint protein 1 (1707 aa).

A disordered region spans residues 1–23 (MESTQVIDWDAEEEEETELSSGS). The interval 1 to 150 (MESTQVIDWD…PRSLLTIEKT (150 aa)) is interaction with CHEK2. Positions 2–222 (ESTQVIDWDA…SSPFGLGSDT (221 aa)) are interaction with the MRN complex. Position 4 is a phosphothreonine (Thr-4). Positions 9 to 18 (WDAEEEEETE) are enriched in acidic residues. One can recognise an FHA domain in the interval 54–105 (NVVGRSPDCSVALPFPSISKQHAVIEISAWNKAPILQDCGSLNGTQIVKPPR). Position 146 is a phosphothreonine (Thr-146). Residues 166-328 (ADSEEEGDFP…EERIPVTPPV (163 aa)) form a disordered region. A phosphoserine mark is found at Ser-168 and Ser-176. A compositionally biased stretch (polar residues) spans 183-192 (GQRNTASPSA). Phosphoserine is present on residues Ser-198 and Ser-220. Phosphothreonine is present on Thr-222. Residues 252-263 (ANGTTAGIQAQP) are compositionally biased toward polar residues. The span at 264-278 (TEHKLKDTKVKKEAG) shows a compositional bias: basic and acidic residues. Phosphoserine is present on Ser-298. Thr-300 carries the phosphothreonine modification. The residue at position 313 (Ser-313) is a Phosphoserine. Thr-315 bears the Phosphothreonine mark. A Phosphoserine modification is found at Ser-360. The residue at position 362 (Thr-362) is a Phosphothreonine. Over residues 369 to 378 (ALDVPLERNH) the composition is skewed to basic and acidic residues. A disordered region spans residues 369-398 (ALDVPLERNHTPMVINSDTDEEEEEEEEVS). Ser-385 carries the post-translational modification Phosphoserine. The segment covering 386–397 (DTDEEEEEEEEV) has biased composition (acidic residues). Thr-387 bears the Phosphothreonine mark. Residues Ser-398, Ser-415, Ser-425, Ser-438, and Ser-442 each carry the phosphoserine modification. Disordered stretches follow at residues 417–497 (DPGA…PGSH), 520–642 (PGPS…AKEC), 679–699 (LFPCTLPQEPGPSHLSLQTPG), and 718–746 (REQSETSELHEAHGSQPSLPREPPGHQHL). Residues 425 to 439 (SQPQVLVEQSQSASG) are compositionally biased toward polar residues. Thr-444 bears the Phosphothreonine mark. Phosphoserine is present on Ser-461. A Phosphothreonine modification is found at Thr-470. Residues Ser-492, Ser-493, Ser-591, Ser-593, and Ser-595 each carry the phosphoserine modification. A compositionally biased stretch (polar residues) spans 580 to 595 (VSEQESTLEVRSQSGS). The span at 626 to 642 (GREREAHVGRTKSAKEC) shows a compositional bias: basic and acidic residues. Basic and acidic residues predominate over residues 719–730 (EQSETSELHEAH). Residues Ser-735 and Ser-750 each carry the phosphoserine modification. Position 769 is an N6-acetyllysine (Lys-769). Basic and acidic residues-rich tracts occupy residues 778–804 (ADRMTPEREPLEREIRGRTENSERDVI), 812–868 (TKDR…REWE), and 875–889 (TPDRGVTEEGSHDQK). 2 disordered regions span residues 778-899 (ADRM…TLKP) and 914-1510 (IITG…QETA). Ser-885, Ser-929, and Ser-962 each carry phosphoserine. Residues 968–986 (STQSLLTSQSQKQSTPQPL) are compositionally biased toward low complexity. Ser-991 bears the Phosphoserine mark. 3 stretches are compositionally biased toward polar residues: residues 1026–1056 (PNTTCPTNQPAASRPTSRPTRGRANRSSTRT), 1068–1086 (QPSTSTEQPVIPKLTSQVT), and 1101–1113 (EIQSPTSTEQSVT). A Phosphothreonine modification is found at Thr-1056. Ser-1104, Ser-1126, and Ser-1128 each carry phosphoserine. A phosphothreonine mark is found at Thr-1132, Thr-1173, and Thr-1234. 4 stretches are compositionally biased toward polar residues: residues 1225-1241 (PLTSAKQPVTPNLTSRA), 1265-1281 (PSTSTEQPDTREPSSQA), 1295-1308 (VPTTPELQPFTSKK), and 1317-1326 (LVTQGRTYKP). Phosphothreonine is present on residues Thr-1297 and Thr-1298. The residue at position 1327 (Ser-1327) is a Phosphoserine. Residues 1343 to 1363 (PSTSTDHLVTPKVTDQSLTLQ) are compositionally biased toward polar residues. Thr-1352 carries the phosphothreonine modification. Ser-1359 carries the phosphoserine modification. The segment covering 1364-1376 (SSPLSASPVSSTP) has biased composition (low complexity). Position 1375 is a phosphothreonine (Thr-1375). A compositionally biased stretch (pro residues) spans 1378 to 1393 (LKPPVPIAQPVTPEPI). A Glycyl lysine isopeptide (Lys-Gly) (interchain with G-Cter in SUMO2) cross-link involves residue Lys-1418. Residues 1421–1441 (SALSEPEPQSSASQSSGASEA) are compositionally biased toward low complexity. 4 positions are modified to phosphoserine: Ser-1435, Ser-1436, Ser-1439, and Ser-1443. Residues 1459–1473 (VIKEEPVETEVKEEP) show a composition bias toward basic and acidic residues. Lys-1461 participates in a covalent cross-link: Glycyl lysine isopeptide (Lys-Gly) (interchain with G-Cter in SUMO1); alternate. Lys-1461 participates in a covalent cross-link: Glycyl lysine isopeptide (Lys-Gly) (interchain with G-Cter in SUMO2); alternate. Thr-1480 is modified (phosphothreonine). Residues 1481–1493 (PEKRKRDHAEEVT) are compositionally biased toward basic and acidic residues. Lys-1496 carries the post-translational modification N6-acetyllysine. 2 BRCT domains span residues 1510 to 1588 (APKV…DYLV) and 1609 to 1700 (RERR…FVLS).

As to quaternary structure, homodimer. Interacts with H2AX, which requires phosphorylation of H2AX on 'Ser-139'. Interacts with the MRN complex, composed of MRE11, RAD50, and NBN. Interacts with CHEK2, which requires ATM-mediated phosphorylation of 'Thr-68' within the FHA domain of CHEK2. Interacts constitutively with the BRCA1-BARD1 complex, SMC1A and TP53BP1. Interacts with ATM and FANCD2, and these interactions are reduced upon DNA damage. Also interacts with the PRKDC complex, composed of XRCC6/KU70, XRCC5/KU80 and PRKDC/XRCC7. This interaction may be required for PRKDC autophosphorylation, which is essential for DNA double strand break (DSB) repair. When phosphorylated by ATM, interacts with RNF8 (via FHA domain). Interacts with CEP164. When phosphorylated, interacts with APTX (via FHA-like domain). Interacts (when phosphorylated) with TOPBP1; promoting TOPBP1 localization to DNA damage sites during mitosis. Interacts (when phosphorylated) with NBN; promoting NBN and MRN complex localization to DNA damage sites. In terms of processing, phosphorylated upon exposure to ionizing radiation (IR), ultraviolet radiation (UV), and hydroxyurea (HU). Phosphorylation in response to IR requires ATM, NBN, and possibly CHEK2. Also phosphorylated during the G2/M phase of the cell cycle and during activation of the mitotic spindle checkpoint. Phosphorylation at Thr-4 by ATM stabilizes and enhances homodimerization via the FHA domain. Phosphorylated at Ser-168 and Ser-198 by CK2 in response to DNA damage during mitosis, promoting interaction with TOPBP1. Phosphorylated by CK2 in response to DNA damage, promoting interaction with NBN and recruitment of the MRN complex to DNA damage sites. Post-translationally, sumoylation at Lys-1461 by PIAS4 following DNA damage promotes ubiquitin-mediated degradation. Ubiquitinated by RNF4, leading to proteasomal degradation; undergoes 'Lys-48'-linked polyubiquitination.

The protein localises to the nucleus. Its subcellular location is the chromosome. Histone reader protein required for checkpoint-mediated cell cycle arrest in response to DNA damage within both the S phase and G2/M phases of the cell cycle. Specifically recognizes and binds histone H2AX phosphorylated at 'Ser-139', a marker of DNA damage, serving as a scaffold for the recruitment of DNA repair and signal transduction proteins to discrete foci of DNA damage sites. Also required for downstream events subsequent to the recruitment of these proteins. These include phosphorylation and activation of the ATM, CHEK1 and CHEK2 kinases, and stabilization of TP53/p53 and apoptosis. ATM and CHEK2 may also be activated independently by a parallel pathway mediated by TP53BP1. Required for chromosomal stability during mitosis by promoting recruitment of TOPBP1 to DNA double strand breaks (DSBs): TOPBP1 forms filamentous assemblies that bridge MDC1 and tether broken chromosomes during mitosis. Required for the repair of DSBs via homologous recombination by promoting recruitment of NBN component of the MRN complex to DSBs. The protein is Mediator of DNA damage checkpoint protein 1 (Mdc1) of Mus musculus (Mouse).